We begin with the raw amino-acid sequence, 481 residues long: Glutamyl-tRNA(Gln) amidotransferase subunit A (481 aa).

Active-site charge relay system residues include Lys78 and Ser153. Ser177 functions as the Acyl-ester intermediate in the catalytic mechanism.

This sequence belongs to the amidase family. GatA subfamily. As to quaternary structure, heterotrimer of A, B and C subunits.

The enzyme catalyses L-glutamyl-tRNA(Gln) + L-glutamine + ATP + H2O = L-glutaminyl-tRNA(Gln) + L-glutamate + ADP + phosphate + H(+). Functionally, allows the formation of correctly charged Gln-tRNA(Gln) through the transamidation of misacylated Glu-tRNA(Gln) in organisms which lack glutaminyl-tRNA synthetase. The reaction takes place in the presence of glutamine and ATP through an activated gamma-phospho-Glu-tRNA(Gln). The protein is Glutamyl-tRNA(Gln) amidotransferase subunit A of Borreliella afzelii (strain PKo) (Borrelia afzelii).